A 744-amino-acid chain; its full sequence is C-type polyheme cytochrome OmcB (744 aa).

The signal sequence occupies residues Met1–Gly23. Cys24 is lipidated: N-palmitoyl cysteine. A lipid anchor (S-diacylglycerol cysteine) is attached at Cys24. Positions 48, 51, 52, 81, 84, 85, 107, 110, 111, 141, 144, 145, 185, 188, 189, 225, 228, 229, 303, 306, 307, 382, 385, 386, 430, 433, 434, 480, 483, 484, 555, 558, 559, 587, 590, and 591 each coordinate heme c.

Post-translationally, binds 12 heme c groups per subunit.

The protein localises to the cell outer membrane. Involved in anaerobic respiration with Fe(3+) as terminal electron acceptor. Acts as an electron-transport mediator in the dissimilatory reduction of Fe(3+). The protein is C-type polyheme cytochrome OmcB (omcB) of Geobacter sulfurreducens (strain DL-1 / KN400).